Consider the following 446-residue polypeptide: Choline monooxygenase, chloroplastic (446 aa).

A chloroplast-targeting transit peptide spans 1-65 (MAASATTMLL…NTSTNKIITK (65 aa)). In terms of domain architecture, Rieske spans 127-234 (WQVAGYSEQV…VAEWGPFILI (108 aa)). Residues Cys-169, His-171, Cys-188, and His-191 each coordinate [2Fe-2S] cluster. Residues His-294 and His-299 each contribute to the Fe cation site.

It belongs to the choline monooxygenase family. The cofactor is [2Fe-2S] cluster. Fe cation serves as cofactor. It depends on Mg(2+) as a cofactor. In terms of tissue distribution, expressed in roots and leaves.

The protein localises to the plastid. The protein resides in the chloroplast stroma. The enzyme catalyses choline + 2 reduced [2Fe-2S]-[ferredoxin] + O2 + 2 H(+) = betaine aldehyde hydrate + 2 oxidized [2Fe-2S]-[ferredoxin] + H2O. Its pathway is amine and polyamine biosynthesis; betaine biosynthesis via choline pathway; betaine aldehyde from choline (monooxygenase route): step 1/1. Its function is as follows. Catalyzes the first step of the osmoprotectant glycine betaine synthesis. The polypeptide is Choline monooxygenase, chloroplastic (CMO) (Beta vulgaris (Sugar beet)).